The sequence spans 165 residues: Myosin regulatory light chain 2, ventricular/cardiac muscle isoform (165 aa).

A N,N,N-trimethylserine modification is found at Ser-2. Asn-14 is subject to Deamidated asparagine. Phosphoserine is present on residues Ser-15 and Ser-19. EF-hand domains follow at residues 24-59 (TQIQ…LGRV), 94-129 (DPEE…QAER), and 130-165 (FSKD…GEEK). Asp-37, Asn-39, Asp-41, and Asp-48 together coordinate Ca(2+). Thr-52 is subject to Phosphothreonine.

As to quaternary structure, myosin is a hexamer of 2 heavy chains and 4 light chains. Interacts with MYOC. In terms of processing, N-terminus is methylated by METTL11A/NTM1. Phosphorylated by MYLK3 and MYLK2; promotes cardiac muscle contraction and function. Dephosphorylated by PPP1CB complexed to PPP1R12B. The phosphorylated form in adult is expressed as gradients across the heart from endocardium (low phosphorylation) to epicardium (high phosphorylation); regulates cardiac torsion and workload distribution.

It localises to the cytoplasm. The protein resides in the myofibril. The protein localises to the sarcomere. It is found in the a band. Contractile protein that plays a role in heart development and function. Following phosphorylation, plays a role in cross-bridge cycling kinetics and cardiac muscle contraction by increasing myosin lever arm stiffness and promoting myosin head diffusion; as a consequence of the increase in maximum contraction force and calcium sensitivity of contraction force. These events altogether slow down myosin kinetics and prolong duty cycle resulting in accumulated myosins being cooperatively recruited to actin binding sites to sustain thin filament activation as a means to fine-tune myofilament calcium sensitivity to force. During cardiogenesis plays an early role in cardiac contractility by promoting cardiac myofibril assembly. The sequence is that of Myosin regulatory light chain 2, ventricular/cardiac muscle isoform from Oryctolagus cuniculus (Rabbit).